A 129-amino-acid polypeptide reads, in one-letter code: Phosphoribosyl-AMP cyclohydrolase (129 aa).

D86 contributes to the Mg(2+) binding site. C87 is a Zn(2+) binding site. Mg(2+)-binding residues include D88 and D90. The Zn(2+) site is built by C104 and C111.

The protein belongs to the PRA-CH family. In terms of assembly, homodimer. Mg(2+) serves as cofactor. Requires Zn(2+) as cofactor.

The protein resides in the cytoplasm. The enzyme catalyses 1-(5-phospho-beta-D-ribosyl)-5'-AMP + H2O = 1-(5-phospho-beta-D-ribosyl)-5-[(5-phospho-beta-D-ribosylamino)methylideneamino]imidazole-4-carboxamide. It participates in amino-acid biosynthesis; L-histidine biosynthesis; L-histidine from 5-phospho-alpha-D-ribose 1-diphosphate: step 3/9. Its function is as follows. Catalyzes the hydrolysis of the adenine ring of phosphoribosyl-AMP. The polypeptide is Phosphoribosyl-AMP cyclohydrolase (Ignicoccus hospitalis (strain KIN4/I / DSM 18386 / JCM 14125)).